A 280-amino-acid chain; its full sequence is Monoacylglycerol lipase (280 aa).

S111 serves as the catalytic Nucleophile. Residues D227 and H257 each act as charge relay system in the active site.

The protein belongs to the AB hydrolase superfamily.

The protein localises to the secreted. It is found in the cell wall. The catalysed reaction is Hydrolyzes glycerol monoesters of long-chain fatty acids.. Functionally, contributes to cell growth, probably by hydrolyzing exogenous lipids. Catalyzes the hydrolysis of monoacylglycerols (MAG) with fatty acid chains ranging from C14 to C18, with a maximum activity on monoolein. Is unable to hydrolyze long-chain diacylglycerol (DAG). This is Monoacylglycerol lipase from Mycolicibacterium smegmatis (strain ATCC 700084 / mc(2)155) (Mycobacterium smegmatis).